Reading from the N-terminus, the 406-residue chain is Interactor protein for cytohesin exchange factors 1 (406 aa).

One can recognise a PH domain in the interval His13–Thr112. 3 disordered regions span residues Asp120 to Leu173, Ser253 to Glu285, and Pro383 to Leu406. The span at Cys123–Val134 shows a compositional bias: acidic residues. Low complexity predominate over residues Ala144–Ala153. Phosphoserine is present on Arg164. A compositionally biased stretch (basic and acidic residues) spans Met272–Glu285. Over residues Glu392–Leu406 the composition is skewed to polar residues.

In terms of assembly, interacts with guanine-nucleotide exchange factors PSCD1, PSCD2, PSCD3 and PSCD4.

It localises to the cytoplasm. The protein localises to the cell membrane. In terms of biological role, enhances the promotion of guanine-nucleotide exchange by PSCD2 on ARF6 in a concentration-dependent manner. The chain is Interactor protein for cytohesin exchange factors 1 (Ipcef1) from Mus musculus (Mouse).